The primary structure comprises 625 residues: Keratin, type II cytoskeletal 1 (625 aa).

Over residues 1–12 (MSFQCSSRSLCR) the composition is skewed to low complexity. The segment at 1-27 (MSFQCSSRSLCRSGGGGGGRNFSSGSA) is disordered. Positions 1-178 (MSFQCSSRSL…DPQIQKVKSQ (178 aa)) are head. Arg12 is modified (omega-N-methylarginine). Residues Ser23 and Ser26 each carry the phosphoserine modification. Arg51 is modified (omega-N-methylarginine). Ser69 carries the post-translational modification Phosphoserine. Positions 171 to 319 (QIQKVKSQER…DIDFFSTLYQ (149 aa)) form a coiled coil. Residues 179–214 (EREQIKSLNDKFASFIDKVRFLEQQNQVLQTKWELL) are coil 1A. An IF rod domain is found at 179–492 (EREQIKSLND…KLLEGEEIRM (314 aa)). The segment at 215–233 (QQVDTSTRTQNLDPFFESY) is linker 1. Residues 234–325 (ISNLRRQVDS…TLYQMELSQM (92 aa)) form a coil 1B region. An N6,N6-dimethyllysine modification is found at Lys275. A linker 12 region spans residues 326–349 (QTQISETNVVLSMDNNRTLDLDGI). The segment at 350–488 (IAEVKAQYDS…ATYRKLLEGE (139 aa)) is coil 2. Positions 388–475 (DSVKNTKMEI…ELMNTKLALD (88 aa)) form a coiled coil. Residues 489-625 (EIRMSGECTP…VSTTYSRGTN (137 aa)) are tail. Disordered stretches follow at residues 496–525 (CTPN…YGSG) and 560–625 (SGGG…RGTN). The span at 500-515 (VSVSVSTSHTSMSGTS) shows a compositional bias: low complexity. 2 stretches are compositionally biased toward gly residues: residues 516–525 (SRGGGRYGSG) and 560–606 (SGGG…GGVK). 3 positions are modified to omega-N-methylarginine: Arg517, Arg574, and Arg596. Polar residues predominate over residues 613–625 (VKFVSTTYSRGTN).

It belongs to the intermediate filament family. Heterotetramer of two type I and two type II keratins. Heterodimer with KRT10. Two heterodimers of KRT1 and KRT10 form a heterotetramer. Forms a heterodimer with KRT14; the interaction is more abundant in the absence of KRT5. Interacts with ITGB1 in the presence of RACK1 and SRC, and with RACK1. Interacts with C1QBP; the association represents a cell surface kininogen receptor. Interacts with EPPK1; interaction is dependent of higher-order structure of intermediate filament. Undergoes deimination of some arginine residues (citrullination).

It is found in the cell membrane. The protein resides in the cytoplasm. Functionally, may regulate the activity of kinases such as PKC and SRC via binding to integrin beta-1 (ITB1) and the receptor of activated protein C kinase 1 (RACK1). In complex with C1QBP is a high affinity receptor for kininogen-1/HMWK. This chain is Keratin, type II cytoskeletal 1, found in Rattus norvegicus (Rat).